The chain runs to 174 residues: Large ribosomal subunit protein uL10 (174 aa).

It belongs to the universal ribosomal protein uL10 family. Part of the ribosomal stalk of the 50S ribosomal subunit. The N-terminus interacts with L11 and the large rRNA to form the base of the stalk. The C-terminus forms an elongated spine to which L12 dimers bind in a sequential fashion forming a multimeric L10(L12)X complex.

In terms of biological role, forms part of the ribosomal stalk, playing a central role in the interaction of the ribosome with GTP-bound translation factors. The sequence is that of Large ribosomal subunit protein uL10 from Anaeromyxobacter dehalogenans (strain 2CP-C).